A 73-amino-acid polypeptide reads, in one-letter code: Large ribosomal subunit protein bL31 (73 aa).

The protein belongs to the bacterial ribosomal protein bL31 family. Type A subfamily. In terms of assembly, part of the 50S ribosomal subunit.

Binds the 23S rRNA. The protein is Large ribosomal subunit protein bL31 of Rhizobium rhizogenes (strain K84 / ATCC BAA-868) (Agrobacterium radiobacter).